Consider the following 384-residue polypeptide: Putative 8-amino-7-oxononanoate synthase (384 aa).

A substrate-binding site is contributed by Arg-18. A pyridoxal 5'-phosphate-binding site is contributed by 105–106; that stretch reads GY. His-130 serves as a coordination point for substrate. Residues Ser-176, 201 to 204, and 233 to 236 each bind pyridoxal 5'-phosphate; these read DDAH and TLSK. Lys-236 carries the post-translational modification N6-(pyridoxal phosphate)lysine. Substrate is bound at residue Thr-349.

This sequence belongs to the class-II pyridoxal-phosphate-dependent aminotransferase family. BioF subfamily. Homodimer. Requires pyridoxal 5'-phosphate as cofactor.

The catalysed reaction is 6-carboxyhexanoyl-[ACP] + L-alanine + H(+) = (8S)-8-amino-7-oxononanoate + holo-[ACP] + CO2. It functions in the pathway cofactor biosynthesis; biotin biosynthesis. Its function is as follows. Catalyzes the decarboxylative condensation of pimeloyl-[acyl-carrier protein] and L-alanine to produce 8-amino-7-oxononanoate (AON), [acyl-carrier protein], and carbon dioxide. This is Putative 8-amino-7-oxononanoate synthase (bioF) from Desulfovibrio desulfuricans (strain ATCC 27774 / DSM 6949 / MB).